The chain runs to 138 residues: Nucleoside diphosphate kinase (138 aa).

ATP is bound by residues lysine 9, phenylalanine 57, arginine 85, threonine 91, arginine 102, and asparagine 112. Catalysis depends on histidine 115, which acts as the Pros-phosphohistidine intermediate.

This sequence belongs to the NDK family. Homotetramer. Mg(2+) serves as cofactor.

It is found in the cytoplasm. It carries out the reaction a 2'-deoxyribonucleoside 5'-diphosphate + ATP = a 2'-deoxyribonucleoside 5'-triphosphate + ADP. The enzyme catalyses a ribonucleoside 5'-diphosphate + ATP = a ribonucleoside 5'-triphosphate + ADP. Functionally, major role in the synthesis of nucleoside triphosphates other than ATP. The ATP gamma phosphate is transferred to the NDP beta phosphate via a ping-pong mechanism, using a phosphorylated active-site intermediate. The chain is Nucleoside diphosphate kinase from Deinococcus deserti (strain DSM 17065 / CIP 109153 / LMG 22923 / VCD115).